We begin with the raw amino-acid sequence, 443 residues long: MEKATERQRILLRHLQPSSSSDASLSASACLSKDSAAYQYGDDVVIVAAQRTALCKAKRGSFKDTFPDELLASVLRALIEKTNVNPSEVGDIVVGTVLGPGSQRASECRMAAFYAGFPETVPIRTVNRQCSSGLQAVADVAAAIKAGFYDIGIGAGLESMTTNPRGWKGSVNPNVKKFEQAHNCLLPMGITSENVAHRFNVSREEQDQAAVDSHRKAASATASGKFKDEITPVKTKIVDPKTGDEKPITVSVDDGIRPNTTLSGLAKLKPVFKEDGTTTAGNSSQLSDGAGAVLLMRRNVAMQKGLPILGVFRTFSAVGVDPAIMGVGPAVAIPAAVKAAGLELNDVDLFEINEAFASQFVYCRNKLGLDAEKINVNGGAIAIGHPLGATGARCVATLLHEMKRRGKDCRFGVVSMCIGSGMGAAAVFERGGGVDELCDVRKV.

The N-terminal 30 residues, 1–30 (MEKATERQRILLRHLQPSSSSDASLSASAC), are a transit peptide targeting the peroxisome. C130 acts as the Acyl-thioester intermediate in catalysis. Residues H385 and C417 each act as proton acceptor in the active site.

This sequence belongs to the thiolase-like superfamily. Thiolase family. Homodimer. In terms of tissue distribution, low levels in seedlings and leaves.

Its subcellular location is the peroxisome. The enzyme catalyses an acyl-CoA + acetyl-CoA = a 3-oxoacyl-CoA + CoA. It functions in the pathway lipid metabolism; fatty acid metabolism. In terms of biological role, involved in fatty-acid beta-oxidation prior to gluconeogenesis during germination and subsequent seedling growth. Implicated in jasmonic acid (JA) biosynthesis. This Arabidopsis thaliana (Mouse-ear cress) protein is 3-ketoacyl-CoA thiolase 1, peroxisomal (KAT1).